The primary structure comprises 334 residues: MADERTSDSVKTRYDIALMKLNDIKIAVFRDSLSTYVEQKTGLTIQFNWPKSRCLVISTLCKIPFPTKSAAELQEMCSLLLCCPERLQLLGYVSVWGEETRDVCLTKTLVFAGEDEKFYGLDFVNETLYLLAETTERFAVLGLRRYDPVYREKDIRFLTKIDDVLQSLIDAQDNLWKFATIVYKNSGRHYIMKSCLENNDGVFVLFLTRKEDFPSRMEWNFFSDVYESMPYDGQVIGSIGKTLLYPKTMFVMMDLSGAIYGIDTIGTGIGSCVKIADDFESFLRQGIVRGYRRYKFFHRNINTVQEILPLCPHTSLGPTFSNNYIYDLSSEDDE.

It belongs to the herpesviridae US22 family.

Its function is as follows. Isoform 3 can transactivate the human immunodeficiency virus type 1 promoter. This Human herpesvirus 6A (strain Uganda-1102) (HHV-6 variant A) protein is Protein U17/U16 (U17/U16).